A 236-amino-acid chain; its full sequence is CHD1 helical C-terminal domain containing protein 1 (236 aa).

Residues 44 to 145 (LDQDTFKTCK…SSQPAKFLVT (102 aa)) form a CHD1 helical C-terminal domain (CHCT) region. The interval 184 to 236 (LSNMQTPGQGSPLPGQPRSQDHVKKDSLRELSQKPKLKRKRIKEAPETPETEP) is disordered. Residues 202 to 216 (SQDHVKKDSLRELSQ) are compositionally biased toward basic and acidic residues.

The protein resides in the cytoplasm. It localises to the nucleus. Functionally, may play a role in regulation of apoptosis. This chain is CHD1 helical C-terminal domain containing protein 1, found in Homo sapiens (Human).